The primary structure comprises 767 residues: Phosphoribosylformylglycinamidine synthase subunit PurL (767 aa).

The active site involves His65. ATP is bound by residues Tyr68 and Lys112. Position 114 (Glu114) interacts with Mg(2+). Substrate is bound by residues 115–118 (SHNH) and Arg137. Residue His116 is the Proton acceptor of the active site. Asp138 serves as a coordination point for Mg(2+). Gln262 provides a ligand contact to substrate. Mg(2+) is bound at residue Asp290. 334-336 (ESQ) contributes to the substrate binding site. ATP contacts are provided by Asp522 and Gly559. Asn560 is a Mg(2+) binding site. Ser562 lines the substrate pocket.

This sequence belongs to the FGAMS family. Monomer. Part of the FGAM synthase complex composed of 1 PurL, 1 PurQ and 2 PurS subunits.

The protein resides in the cytoplasm. It catalyses the reaction N(2)-formyl-N(1)-(5-phospho-beta-D-ribosyl)glycinamide + L-glutamine + ATP + H2O = 2-formamido-N(1)-(5-O-phospho-beta-D-ribosyl)acetamidine + L-glutamate + ADP + phosphate + H(+). It functions in the pathway purine metabolism; IMP biosynthesis via de novo pathway; 5-amino-1-(5-phospho-D-ribosyl)imidazole from N(2)-formyl-N(1)-(5-phospho-D-ribosyl)glycinamide: step 1/2. In terms of biological role, part of the phosphoribosylformylglycinamidine synthase complex involved in the purines biosynthetic pathway. Catalyzes the ATP-dependent conversion of formylglycinamide ribonucleotide (FGAR) and glutamine to yield formylglycinamidine ribonucleotide (FGAM) and glutamate. The FGAM synthase complex is composed of three subunits. PurQ produces an ammonia molecule by converting glutamine to glutamate. PurL transfers the ammonia molecule to FGAR to form FGAM in an ATP-dependent manner. PurS interacts with PurQ and PurL and is thought to assist in the transfer of the ammonia molecule from PurQ to PurL. This Renibacterium salmoninarum (strain ATCC 33209 / DSM 20767 / JCM 11484 / NBRC 15589 / NCIMB 2235) protein is Phosphoribosylformylglycinamidine synthase subunit PurL.